The sequence spans 3086 residues: Genome polyprotein (3086 aa).

The 135-residue stretch at 122–256 (RRSKILACDL…RAGIHTIKHY (135 aa)) folds into the Peptidase S30 domain. Residues histidine 173, aspartate 182, and serine 215 each act as for P1 proteinase activity in the active site. Positions 590–711 (YYVAPEGYCY…TGEMLDYNVG (122 aa)) constitute a Peptidase C6 domain. Residues cysteine 598 and histidine 670 each act as for helper component proteinase activity in the active site. The 153-residue stretch at 1189-1341 (ISSDTANAEF…PMFPVRVSEA (153 aa)) folds into the Helicase ATP-binding domain. 1202-1209 (GGVGTGKS) is a binding site for ATP. The DEAH box signature appears at 1291–1294 (DECH). At tyrosine 1870 the chain carries O-(5'-phospho-RNA)-tyrosine. The disordered stretch occupies residues 1970 to 1990 (HDGELRQSRPSRPIQKDQVPA). The region spanning 2000 to 2217 (SKSIAKGLRD…VNYGTMDLTS (218 aa)) is the Peptidase C4 domain. Catalysis depends on for nuclear inclusion protein A activity residues histidine 2045, aspartate 2080, and cysteine 2149. A RdRp catalytic domain is found at 2482–2606 (WDYFDADGSR…AVEPSLSDKI (125 aa)). Over residues 2762–2821 (TAASSAATQTSTTSPTVTSTSGASTSTSSGTTSAPLASTTPPVSATTTPSTGTTAPTTPT) the composition is skewed to low complexity. The tract at residues 2762 to 2822 (TAASSAATQT…GTTAPTTPTV (61 aa)) is disordered. Residue threonine 3069 is modified to Phosphothreonine.

It belongs to the potyviridae genome polyprotein family. VPg is uridylylated by the polymerase and is covalently attached to the 5'-end of the genomic RNA. This uridylylated form acts as a nucleotide-peptide primer for the polymerase. In terms of processing, genome polyprotein of potyviruses undergoes post-translational proteolytic processing by the main proteinase NIa-pro resulting in the production of at least ten individual proteins. The P1 proteinase and the HC-pro cleave only their respective C-termini autocatalytically. 6K1 is essential for proper proteolytic separation of P3 from CI.

The protein resides in the host cytoplasmic vesicle membrane. It is found in the host cytoplasmic vesicle. It localises to the virion. The catalysed reaction is RNA(n) + a ribonucleoside 5'-triphosphate = RNA(n+1) + diphosphate. It carries out the reaction Hydrolyzes glutaminyl bonds, and activity is further restricted by preferences for the amino acids in P6 - P1' that vary with the species of potyvirus, e.g. Glu-Xaa-Xaa-Tyr-Xaa-Gln-|-(Ser or Gly) for the enzyme from tobacco etch virus. The natural substrate is the viral polyprotein, but other proteins and oligopeptides containing the appropriate consensus sequence are also cleaved.. It catalyses the reaction Hydrolyzes a Gly-|-Gly bond at its own C-terminus, commonly in the sequence -Tyr-Xaa-Val-Gly-|-Gly, in the processing of the potyviral polyprotein.. Required for aphid transmission and also has proteolytic activity. Only cleaves a Gly-Gly dipeptide at its own C-terminus. Interacts with virions and aphid stylets. Acts as a suppressor of RNA-mediated gene silencing, also known as post-transcriptional gene silencing (PTGS), a mechanism of plant viral defense that limits the accumulation of viral RNAs. May have RNA-binding activity. In terms of biological role, has helicase activity. It may be involved in replication. Functionally, indispensable for virus replication. Reduces the abundance of host transcripts related to jasmonic acid biosynthesis therefore altering the host defenses. In order to increase its own stability, decreases host protein degradation pathways. Its function is as follows. Indispensable for virus replication. Mediates the cap-independent, EIF4E-dependent translation of viral genomic RNAs. Binds to the cap-binding site of host EIF4E and thus interferes with the host EIF4E-dependent mRNA export and translation. VPg-RNA directly binds EIF4E and is a template for transcription. Also forms trimeric complexes with EIF4E-EIF4G, which are templates for translation. In terms of biological role, has RNA-binding and proteolytic activities. Functionally, an RNA-dependent RNA polymerase that plays an essential role in the virus replication. Its function is as follows. Involved in aphid transmission, cell-to-cell and systemis movement, encapsidation of the viral RNA and in the regulation of viral RNA amplification. This chain is Genome polyprotein, found in Dactylis glomerata (Orchard grass).